Reading from the N-terminus, the 213-residue chain is GTP-binding protein YPTC4 (213 aa).

Position 13–21 (13–21 (GDTGVGKSC)) interacts with GTP. The Effector region signature appears at 35 to 43 (HDLTIGVEF). GTP is bound by residues 61 to 65 (DTAGQ), 119 to 122 (NKCD), and 149 to 151 (SAR). Residues 194-213 (AGPQTVKPGEGGAAKSSSCC) are disordered. Residues Cys-212 and Cys-213 are each lipidated (S-geranylgeranyl cysteine).

It belongs to the small GTPase superfamily. Rab family.

It is found in the cell membrane. Protein transport. Probably involved in vesicular traffic. This chain is GTP-binding protein YPTC4 (YPTC4), found in Chlamydomonas reinhardtii (Chlamydomonas smithii).